The primary structure comprises 729 residues: MAHTRTFTSRNRSVSLSNPSFSIDGFDNSTVTLGYTGPLRTQRIRPPLVQMSGPIHSTRRTEPLFSPSPQESPDSSSTVDVPPEDDFVFKNANLLRSGQLGMCNDPYCTTCPSYYNRQAAQLHTSRVSASRFRTVLYGDARGWAKRFASSVRRCLPGIMNPHSKFVQVWTRVLAFSSLVAIFIDPLFFFLLLIQQDNKCIAIDWRATKVLVSLRSITDLIFFINILLQFRLAYVAPESRIVGAGQLVDHPRKIARHYFRGKFLLDMFIVFPIPQIMILRIIPLHLGTRREESEKQILRATVLFQYIPKLYRLLPLLAGQTSTGFIFESAWANFVINLLTFMLAGHAVGSCWYLSALQRVKKCMLNAWNISADERRNLIDCARGSYASKSQRDLWRDNASVNACFQENGYTYGIYLKAVNLTNESSFFTRFSYSLYWGFQQISTLAGNLSPSYSVGEVFFTMGIIGLGLLLFARLIGNMHNFLQSLDRRRMEMMLRKRDVEQWMSHRRLPEDIRKRVREVERYTWAATRGVNEELLFENMPDDLQRDIRRHLFKFLKKVRIFSLMDESVLDSIRERLKQRTYIRSSTVLHHRGLVEKMVFIVRGEMESIGEDGSVLPLSEGDVCGEELLTWCLSSINPDGTRIKMPPKGLVSNRNVRCVTNVEAFSLSVADLEDVTSLFSRFLRSHRVQGAIRYESPYWRLRAAMQIQVAWRYRKRQLQRLNTAHSNSNR.

Residues 1–172 (MAHTRTFTSR…SKFVQVWTRV (172 aa)) lie on the Cytoplasmic side of the membrane. The disordered stretch occupies residues 52 to 82 (SGPIHSTRRTEPLFSPSPQESPDSSSTVDVP). Over residues 67–81 (PSPQESPDSSSTVDV) the composition is skewed to low complexity. Residues 173-193 (LAFSSLVAIFIDPLFFFLLLI) traverse the membrane as a helical segment. The Extracellular portion of the chain corresponds to 194-208 (QQDNKCIAIDWRATK). Residues 209 to 229 (VLVSLRSITDLIFFINILLQF) traverse the membrane as a helical segment. The Cytoplasmic segment spans residues 230–261 (RLAYVAPESRIVGAGQLVDHPRKIARHYFRGK). The helical transmembrane segment at 262-282 (FLLDMFIVFPIPQIMILRIIP) threads the bilayer. Residues 283-295 (LHLGTRREESEKQ) lie on the Extracellular side of the membrane. A helical transmembrane segment spans residues 296-316 (ILRATVLFQYIPKLYRLLPLL). Over 317 to 332 (AGQTSTGFIFESAWAN) the chain is Cytoplasmic. Residues 333-353 (FVINLLTFMLAGHAVGSCWYL) form a helical membrane-spanning segment. Residues 354–451 (SALQRVKKCM…STLAGNLSPS (98 aa)) lie on the Extracellular side of the membrane. Residues 452–472 (YSVGEVFFTMGIIGLGLLLFA) traverse the membrane as a helical segment. The Cytoplasmic portion of the chain corresponds to 473–729 (RLIGNMHNFL…LNTAHSNSNR (257 aa)). A nucleoside 3',5'-cyclic phosphate-binding positions include 560–677 (IFSL…VTSL) and Glu625. Residues 678–694 (FSRFLRSHRVQGAIRYE) are calmodulin-binding. The IQ domain maps to 699-728 (RLRAAMQIQVAWRYRKRQLQRLNTAHSNSN).

It belongs to the cyclic nucleotide-gated cation channel (TC 1.A.1.5) family. As to quaternary structure, homotetramer or heterotetramer.

It localises to the cell membrane. In terms of biological role, putative cyclic nucleotide-gated ion channel. The polypeptide is Putative cyclic nucleotide-gated ion channel 19 (CNGC19) (Arabidopsis thaliana (Mouse-ear cress)).